A 369-amino-acid chain; its full sequence is MQFLAWFNMLLLLPCFSTTKTCFPGCHCEVESFGLFDSFSLTKVDCSGIGSHIVPVPIPLDTSYLDLSSNKLETINESMLTGPGYTTLVSLDLSYNNIAKISSTTFSRLRYLESLDLSHNSLEVLPEDCFSSSPLGDIDLSNNKLLDIALDVFASKGQGKPLNVDLSNNMLSKITRNHEKSIPNIQNLNLSGNRLTSVPNLQGIPLRYLNLDGNPLAKIEKGDFKGLKGLIHLSLSGLHDFRELSPYSFKELPALQVLDLSNNPNLRSLTAEVIFGLNSIQELNLSGTGVSSLPKTVLKYLPSLKSITLRKNIQCFKTIKEGQYHRQIGLTKLGLGAEELLWCKTPCPRPVCRCRDKPLQSAPQNLPTP.

Residues 1 to 19 form the signal peptide; sequence MQFLAWFNMLLLLPCFSTT. An LRRNT domain is found at 20–60; sequence KTCFPGCHCEVESFGLFDSFSLTKVDCSGIGSHIVPVPIPL. LRR repeat units lie at residues 61 to 81, 87 to 108, 111 to 132, 134 to 155, 161 to 181, 184 to 205, 206 to 226, 229 to 248, 254 to 276, 279 to 300, and 303 to 323; these read DTSYLDLSSNKLETINESMLT, TLVSLDLSYNNIAKISSTTFSR, YLESLDLSHNSLEVLPEDCFSS, PLGDIDLSNNKLLDIALDVFAS, PLNVDLSNNMLSKITRNHEKS, NIQNLNLSGNRLTSVPNLQGIP, LRYLNLDGNPLAKIEKGDFKG, GLIHLSLSGLHDFRELSPYS, ALQVLDLSNNPNLRSLTAEVIFG, SIQELNLSGTGVSSLPKTVLKY, and SLKSITLRKNIQCFKTIKEGQ. A glycan (N-linked (GlcNAc...) asparagine) is linked at Asn-76. A glycan (N-linked (GlcNAc...) asparagine) is linked at Asn-189. N-linked (GlcNAc...) asparagine glycosylation is present at Asn-284.

Forms a ternary complex with chordin/CHRD and BMP4. In terms of assembly, interacts with FZD4 (via FZ domain); competes with WNT2B for binding to FZD4, inhibiting Wnt signaling and repressing peripheral eye development. Interacts with BMP4; shows stronger interaction with BMP4 than isoform 2. Interacts with DVR1/VG1; the interaction is inhibited by BMP4. Interacts with BMP7. As to quaternary structure, interacts with FZD4 (via FZ domain); competes with WNT2B for binding to FZD4, inhibiting Wnt signaling and repressing peripheral eye development. Interacts with BMP4; shows weaker interaction with BMP4 than isoform 1. Interacts with DVR1/VG1; the interaction is inhibited by BMP4. Interacts with BMP7. N-glycosylated. As to expression, during embryonic development, expressed in the middle primitive streak and Hensen's node. Expressed in the peripheral region of the developing eye. Expressed in the presomitic mesoderm during somitogenesis in a NOTCH-dependent manner.

Its subcellular location is the secreted. Contributes to various developmental events through its interactions with multiple signaling pathways. Dorsalizing factor involved in the induction of Hensen's node by inhibiting bone morphogenetic proteins during gastrulation and by enhancing DVR1/VG1 activity. Wnt signaling inhibitor which competes with WNT2B for binding to Wnt receptor FZD4 and represses WNT2B-dependent development of the peripheral eye. Functionally, shows strong bone morphogenetic protein antagonistic activity. Its function is as follows. Shows weak bone morphogenetic protein antagonistic activity. The polypeptide is Tsukushi (TSKU) (Gallus gallus (Chicken)).